Reading from the N-terminus, the 656-residue chain is Bifunctional protein ThiO/ThiG (656 aa).

A thiO region spans residues methionine 1–lysine 395. FAD contacts are provided by residues valine 7–valine 21 and alanine 48–methionine 50. Glutamate 56 is a glycine binding site. Valine 169 contributes to the FAD binding site. Glycine-binding residues include arginine 298 and arginine 324. FAD is bound at residue histidine 322–leucine 328. The thiG stretch occupies residues aspartate 396 to glycine 656. Lysine 498 acts as the Schiff-base intermediate with DXP in catalysis. 1-deoxy-D-xylulose 5-phosphate-binding positions include glycine 559, alanine 585–glycine 586, and asparagine 607–serine 608.

In the N-terminal section; belongs to the DAO family. ThiO subfamily. The protein in the C-terminal section; belongs to the ThiG family. In terms of assembly, interacts with ThiH and ThiS. It depends on FAD as a cofactor.

It localises to the cytoplasm. It catalyses the reaction glycine + O2 + H2O = glyoxylate + H2O2 + NH4(+). It carries out the reaction [ThiS sulfur-carrier protein]-C-terminal-Gly-aminoethanethioate + 2-iminoacetate + 1-deoxy-D-xylulose 5-phosphate = [ThiS sulfur-carrier protein]-C-terminal Gly-Gly + 2-[(2R,5Z)-2-carboxy-4-methylthiazol-5(2H)-ylidene]ethyl phosphate + 2 H2O + H(+). It participates in cofactor biosynthesis; thiamine diphosphate biosynthesis. Catalyzes the FAD-dependent oxidative deamination of glycine. Is essential for thiamine biosynthesis since the oxidation of glycine catalyzed by ThiO generates the glycine imine intermediate (dehydroglycine) required for the biosynthesis of the thiazole ring of thiamine pyrophosphate. Functionally, catalyzes the rearrangement of 1-deoxy-D-xylulose 5-phosphate (DXP) to produce the thiazole phosphate moiety of thiamine. Sulfur is provided by the thiocarboxylate moiety of the carrier protein ThiS. In vitro, sulfur can be provided by H(2)S. This Synechocystis sp. (strain ATCC 27184 / PCC 6803 / Kazusa) protein is Bifunctional protein ThiO/ThiG (thiO/thiG).